The chain runs to 227 residues: Uracil-DNA glycosylase (227 aa).

Residue Asp68 is the Proton acceptor of the active site.

The protein belongs to the uracil-DNA glycosylase (UDG) superfamily. UNG family.

The protein localises to the cytoplasm. The enzyme catalyses Hydrolyzes single-stranded DNA or mismatched double-stranded DNA and polynucleotides, releasing free uracil.. Functionally, excises uracil residues from the DNA which can arise as a result of misincorporation of dUMP residues by DNA polymerase or due to deamination of cytosine. This Mycobacterium ulcerans (strain Agy99) protein is Uracil-DNA glycosylase.